The chain runs to 353 residues: RNA 3'-terminal phosphate cyclase (353 aa).

Residues Q100 and 289–292 contribute to the ATP site; that span reads HMSD. H315 serves as the catalytic Tele-AMP-histidine intermediate.

Belongs to the RNA 3'-terminal cyclase family. Type 1 subfamily.

It localises to the cytoplasm. The catalysed reaction is a 3'-end 3'-phospho-ribonucleotide-RNA + ATP = a 3'-end 2',3'-cyclophospho-ribonucleotide-RNA + AMP + diphosphate. Functionally, catalyzes the conversion of 3'-phosphate to a 2',3'-cyclic phosphodiester at the end of RNA. The mechanism of action of the enzyme occurs in 3 steps: (A) adenylation of the enzyme by ATP; (B) transfer of adenylate to an RNA-N3'P to produce RNA-N3'PP5'A; (C) and attack of the adjacent 2'-hydroxyl on the 3'-phosphorus in the diester linkage to produce the cyclic end product. The biological role of this enzyme is unknown but it is likely to function in some aspects of cellular RNA processing. This Ignicoccus hospitalis (strain KIN4/I / DSM 18386 / JCM 14125) protein is RNA 3'-terminal phosphate cyclase.